Consider the following 430-residue polypeptide: L-lysine N6-monooxygenase MbtG (430 aa).

Residues 1–21 (MTATLAVIGAGPKAVAVAAKA) form the signal peptide.

It belongs to the lysine N(6)-hydroxylase/L-ornithine N(5)-oxygenase family. FAD serves as cofactor.

The catalysed reaction is L-lysine + NADPH + O2 = N(6)-hydroxy-L-lysine + NADP(+) + H2O. The protein operates within siderophore biosynthesis; mycobactin biosynthesis. Flavoprotein monooxygenase required for N-hydroxylation of the two acylated lysine residues during mycobactin assembly, thus producing the hydroxamate groups necessary for iron sequestration. Is also able, but less efficiently, to hydroxylate L-lysine (non acylated) in vitro. This is L-lysine N6-monooxygenase MbtG (mbtG) from Mycobacterium sp. (strain MCS).